We begin with the raw amino-acid sequence, 1234 residues long: DNA-directed RNA polymerase subunit beta (1234 aa).

Residues Val1189–Asp1212 form a disordered region. A compositionally biased stretch (acidic residues) spans Asn1195–Asp1212.

It belongs to the RNA polymerase beta chain family. In terms of assembly, the RNAP catalytic core consists of 2 alpha, 1 beta, 1 beta' and 1 omega subunit. When a sigma factor is associated with the core the holoenzyme is formed, which can initiate transcription.

The enzyme catalyses RNA(n) + a ribonucleoside 5'-triphosphate = RNA(n+1) + diphosphate. DNA-dependent RNA polymerase catalyzes the transcription of DNA into RNA using the four ribonucleoside triphosphates as substrates. The polypeptide is DNA-directed RNA polymerase subunit beta (Clostridium kluyveri (strain NBRC 12016)).